A 362-amino-acid chain; its full sequence is Glutamate 5-kinase (362 aa).

Lysine 3 is an ATP binding site. 3 residues coordinate substrate: serine 43, aspartate 128, and asparagine 140. ATP is bound by residues threonine 160–aspartate 161 and threonine 202–lysine 208. The PUA domain occupies proline 267–serine 348.

It belongs to the glutamate 5-kinase family.

The protein localises to the cytoplasm. The catalysed reaction is L-glutamate + ATP = L-glutamyl 5-phosphate + ADP. The protein operates within amino-acid biosynthesis; L-proline biosynthesis; L-glutamate 5-semialdehyde from L-glutamate: step 1/2. In terms of biological role, catalyzes the transfer of a phosphate group to glutamate to form L-glutamate 5-phosphate. The protein is Glutamate 5-kinase of Xanthomonas campestris pv. campestris (strain 8004).